The primary structure comprises 181 residues: Adenine phosphoribosyltransferase (181 aa).

This sequence belongs to the purine/pyrimidine phosphoribosyltransferase family. In terms of assembly, homodimer.

The protein resides in the cytoplasm. The catalysed reaction is AMP + diphosphate = 5-phospho-alpha-D-ribose 1-diphosphate + adenine. It functions in the pathway purine metabolism; AMP biosynthesis via salvage pathway; AMP from adenine: step 1/1. Catalyzes a salvage reaction resulting in the formation of AMP, that is energically less costly than de novo synthesis. This Chelativorans sp. (strain BNC1) protein is Adenine phosphoribosyltransferase.